The following is a 446-amino-acid chain: Glutamate-1-semialdehyde 2,1-aminomutase (446 aa).

At lysine 263 the chain carries N6-(pyridoxal phosphate)lysine.

Belongs to the class-III pyridoxal-phosphate-dependent aminotransferase family. HemL subfamily. Requires pyridoxal 5'-phosphate as cofactor.

The protein localises to the cytoplasm. The catalysed reaction is (S)-4-amino-5-oxopentanoate = 5-aminolevulinate. The protein operates within porphyrin-containing compound metabolism; protoporphyrin-IX biosynthesis; 5-aminolevulinate from L-glutamyl-tRNA(Glu): step 2/2. In Haloquadratum walsbyi (strain DSM 16790 / HBSQ001), this protein is Glutamate-1-semialdehyde 2,1-aminomutase.